Here is a 421-residue protein sequence, read N- to C-terminus: Atrochrysone carboxyl ACP thioesterase (421 aa).

Zn(2+)-binding residues include H207, H209, D211, and H212. D211 (proton donor/acceptor) is an active-site residue.

It belongs to the metallo-beta-lactamase superfamily. Zn(2+) is required as a cofactor. Specifically expressed in conidia.

The enzyme catalyses atrochrysone carboxyl-[ACP] + H2O = atrochrysone carboxylate + holo-[ACP] + H(+). The protein operates within secondary metabolite biosynthesis. Its function is as follows. Atrochrysone carboxyl ACP thioesterase; part of the gene cluster that mediates the biosynthesis of trypacidin, a mycotoxin with antiprotozoal activity and that plays a role in the infection process. The pathway begins with the synthesis of atrochrysone thioester by the polyketide synthase (PKS) tpcC. The atrochrysone carboxyl ACP thioesterase tpcB then breaks the thioester bond and releases the atrochrysone carboxylic acid from tpcC. The decarboxylase tpcK converts atrochrysone carboxylic acid to atrochrysone which is further reduced into emodin anthrone. The next step is performed by the emodin anthrone oxygenase tpcL that catalyzes the oxidation of emodin anthrone to emodin. Emodin O-methyltransferase encoded by tpcA catalyzes methylation of the 8-hydroxy group of emodin to form questin. Ring cleavage of questin by questin oxidase tpcI leads to desmethylsulochrin via several intermediates including questin epoxide. Another methylation step catalyzed by tpcM leads to the formation of sulochrin which is further converted to monomethylsulfochrin by tpcH. Finally, the tpcJ catalyzes the conversion of monomethylsulfochrin to trypacidin. Trypacidin is toxic for human pulmonary and bronchial epithelial cells by initiating the intracellular formation of nitric oxide (NO) and hydrogen peroxide (H(2)O(2)), thus triggering host necrotic cell death. The trypacidin pathway is also able to produce endocrocin via a distinct route from the endocrocin Enc pathway. This chain is Atrochrysone carboxyl ACP thioesterase, found in Aspergillus fumigatus (strain ATCC MYA-4609 / CBS 101355 / FGSC A1100 / Af293) (Neosartorya fumigata).